The primary structure comprises 93 residues: uncharacterized protein (93 aa).

3 consecutive transmembrane segments (helical) span residues 9–29 (ITVI…PQLI), 40–60 (ISLA…IYGI), and 66–86 (PIIV…YLKI).

It is found in the cell membrane. This is an uncharacterized protein from Methanocaldococcus jannaschii (strain ATCC 43067 / DSM 2661 / JAL-1 / JCM 10045 / NBRC 100440) (Methanococcus jannaschii).